A 179-amino-acid polypeptide reads, in one-letter code: Large ribosomal subunit protein uL16 (179 aa).

The tract at residues 147–179 is disordered; sequence KASSASLANLDEDANSQTDDETSSSGSVATVES. Residues 156-168 show a composition bias toward acidic residues; sequence LDEDANSQTDDET. Polar residues predominate over residues 169 to 179; sequence SSSGSVATVES.

It belongs to the universal ribosomal protein uL16 family. In terms of assembly, part of the 50S ribosomal subunit.

Its function is as follows. Binds 23S rRNA and is also seen to make contacts with the A and possibly P site tRNAs. The sequence is that of Large ribosomal subunit protein uL16 from Prochlorococcus marinus (strain MIT 9211).